We begin with the raw amino-acid sequence, 115 residues long: Cysteine-rich venom protein 5 (115 aa).

A signal peptide spans 1–22 (MSKVMIIMLVGMIFAIISTVSG). Disulfide bonds link cysteine 26/cysteine 41, cysteine 33/cysteine 44, and cysteine 40/cysteine 51. The disordered stretch occupies residues 54 to 115 (RIGPPINTQP…RKPTNRPRSH (62 aa)). 2 stretches are compositionally biased toward basic residues: residues 68–77 (QPTRRTRGPK) and 86–115 (NRTR…PRSH).

As to expression, expressed by the venom gland.

The protein resides in the secreted. In Pimpla hypochondriaca (Parasitoid wasp), this protein is Cysteine-rich venom protein 5.